The chain runs to 446 residues: Chromosomal replication initiator protein DnaA (446 aa).

The tract at residues 1-92 (MENISDLWNS…SQAEEEIDLP (92 aa)) is domain I, interacts with DnaA modulators. The interval 93 to 109 (PSKPNAAQDDSNHLPQS) is domain II. The interval 110–326 (MLNPKYTFDT…GALIRVVAYS (217 aa)) is domain III, AAA+ region. Gly154, Gly156, Lys157, and Thr158 together coordinate ATP. A domain IV, binds dsDNA region spans residues 327–446 (SLINKDINAD…QVEEINDILK (120 aa)).

This sequence belongs to the DnaA family. As to quaternary structure, oligomerizes as a right-handed, spiral filament on DNA at oriC.

Its subcellular location is the cytoplasm. Functionally, plays an essential role in the initiation and regulation of chromosomal replication. ATP-DnaA binds to the origin of replication (oriC) to initiate formation of the DNA replication initiation complex once per cell cycle. Binds the DnaA box (a 9 base pair repeat at the origin) and separates the double-stranded (ds)DNA. Forms a right-handed helical filament on oriC DNA; dsDNA binds to the exterior of the filament while single-stranded (ss)DNA is stabiized in the filament's interior. The ATP-DnaA-oriC complex binds and stabilizes one strand of the AT-rich DNA unwinding element (DUE), permitting loading of DNA polymerase. After initiation quickly degrades to an ADP-DnaA complex that is not apt for DNA replication. Binds acidic phospholipids. The protein is Chromosomal replication initiator protein DnaA of Bacillus cereus (strain 03BB102).